The primary structure comprises 258 residues: Cytosolic Fe-S cluster assembly factor Nubp2 homolog (258 aa).

Glycine 14–serine 21 provides a ligand contact to ATP. Positions 188 and 191 each coordinate [4Fe-4S] cluster.

Belongs to the Mrp/NBP35 ATP-binding proteins family. NUBP2/CFD1 subfamily. In terms of assembly, heterotetramer of 2 Nubp1 and 2 Nubp2 chains. Requires [4Fe-4S] cluster as cofactor.

Its subcellular location is the cytoplasm. Its function is as follows. Component of the cytosolic iron-sulfur (Fe/S) protein assembly (CIA) machinery. Required for maturation of extramitochondrial Fe-S proteins. The Nubp1-Nubp2 heterotetramer forms a Fe-S scaffold complex, mediating the de novo assembly of an Fe-S cluster and its transfer to target apoproteins. This chain is Cytosolic Fe-S cluster assembly factor Nubp2 homolog, found in Drosophila pseudoobscura pseudoobscura (Fruit fly).